Reading from the N-terminus, the 102-residue chain is Small ribosomal subunit protein uS10 (102 aa).

The protein belongs to the universal ribosomal protein uS10 family. As to quaternary structure, part of the 30S ribosomal subunit.

Functionally, involved in the binding of tRNA to the ribosomes. This chain is Small ribosomal subunit protein uS10, found in Lactiplantibacillus plantarum (strain ATCC BAA-793 / NCIMB 8826 / WCFS1) (Lactobacillus plantarum).